The chain runs to 366 residues: Cobalt-precorrin-5B C(1)-methyltransferase (366 aa).

This sequence belongs to the CbiD family.

The catalysed reaction is Co-precorrin-5B + S-adenosyl-L-methionine = Co-precorrin-6A + S-adenosyl-L-homocysteine. Its pathway is cofactor biosynthesis; adenosylcobalamin biosynthesis; cob(II)yrinate a,c-diamide from sirohydrochlorin (anaerobic route): step 6/10. In terms of biological role, catalyzes the methylation of C-1 in cobalt-precorrin-5B to form cobalt-precorrin-6A. This Pseudomonas paraeruginosa (strain DSM 24068 / PA7) (Pseudomonas aeruginosa (strain PA7)) protein is Cobalt-precorrin-5B C(1)-methyltransferase.